The sequence spans 141 residues: VLSPDDKKHVKAAWGKVGEHAGEYGAEALERMFLSFPTTKTYFPHFNLSHGSDQVKGHGKKVADALTLAVGHVDDMPHALSKLSDLHAHKLRVDPVNFKLLSHCLLVTLAAHLPAEFTPAVHASLDKFLASVSTVLTSKYR.

In terms of domain architecture, Globin spans 1–141; the sequence is VLSPDDKKHV…VSTVLTSKYR (141 aa). Serine 3 is subject to Phosphoserine. Residues lysine 7 and lysine 11 each carry the N6-succinyllysine modification. N6-acetyllysine; alternate is present on lysine 16. At lysine 16 the chain carries N6-succinyllysine; alternate. Phosphotyrosine is present on tyrosine 24. Serine 35 bears the Phosphoserine mark. Lysine 40 carries the N6-succinyllysine modification. A Phosphoserine modification is found at serine 49. O2 is bound at residue histidine 58. Histidine 87 serves as a coordination point for heme b. The residue at position 102 (serine 102) is a Phosphoserine. A Phosphothreonine modification is found at threonine 108. 2 positions are modified to phosphoserine: serine 124 and serine 131. 2 positions are modified to phosphothreonine: threonine 134 and threonine 137. Position 138 is a phosphoserine (serine 138).

The protein belongs to the globin family. Heterotetramer of two alpha chains and two beta chains. As to expression, red blood cells.

Functionally, involved in oxygen transport from the lung to the various peripheral tissues. In terms of biological role, hemopressin acts as an antagonist peptide of the cannabinoid receptor CNR1. Hemopressin-binding efficiently blocks cannabinoid receptor CNR1 and subsequent signaling. The chain is Hemoglobin subunit alpha (HBA) from Cercocebus atys (Sooty mangabey).